A 333-amino-acid polypeptide reads, in one-letter code: cGAMP-activated phospholipase (333 aa).

The PNPLA domain maps to 10 to 191 (LALSGGGYRG…VGNAPGLFGL (182 aa)). The GXGXXG motif lies at 14-19 (GGGYRG). A GXSXG motif is present at residues 46 to 50 (GTSAG). The Nucleophile role is filled by S48. D178 acts as the Proton acceptor in catalysis. Positions 178 to 180 (DGG) match the DGA/G motif.

The protein belongs to the patatin family.

It carries out the reaction a 1,2-diacyl-sn-glycero-3-phosphocholine + H2O = a 2-acyl-sn-glycero-3-phosphocholine + a fatty acid + H(+). It catalyses the reaction 1,2-di-(9Z-octadecenoyl)-sn-glycero-3-phosphoethanolamine + 2 H2O = sn-glycero-3-phosphoethanolamine + 2 (9Z)-octadecenoate + 2 H(+). With respect to regulation, phospholipase activity is specifically activated upon cGAMP binding, which is produced by the cognate cyclic nucleotide synthase encoded in the same operon. Is not activated by cyclic dinucleotides 2',3'-cGAMP, c-diAMP or 3',3'-c-diGMP. Effector phospholipase of a CBASS antiviral system. CBASS (cyclic oligonucleotide-based antiphage signaling system) provides immunity against bacteriophages. The CD-NTase protein (CdnA) synthesizes cyclic nucleotides in response to infection; these serve as specific second messenger signals. The signals activate a diverse range of effectors, leading to bacterial cell death and thus abortive phage infection. A type II-A(GA) CBASS system. Functionally, phospholipase that is activated upon binding to the cyclic dinucleotide (CDN) second messenger 3',3'-cyclic GMP-AMP (cGAMP). Degrades phospholipids in the cell membrane. Its function is as follows. The capV-cdnA-cap2-cap3 operon provides about 10(4)-fold protection in strain BWHPSA011 against infection by phage PaMx41. In P.aeruginosa strain PAO1 it confers protection against phages PaMx41 and JBD18 but not JBD67 (JBD18 and JBD67 do not replicate in BWHPSA011 / Pa011). When acb2 in JBD67 is deleted this CBASS operon then protects against JDB67 also. This CBASS system limits prophage induction of lysogenized JBD67 as well as viral lytic replication. The sequence is that of cGAMP-activated phospholipase from Pseudomonas aeruginosa (strain BWHPSA011 / Pa011).